The following is a 543-amino-acid chain: 2,3-bisphosphoglycerate-independent phosphoglycerate mutase (543 aa).

Mn(2+) is bound by residues aspartate 24 and serine 74. Serine 74 (phosphoserine intermediate) is an active-site residue. Substrate-binding positions include histidine 135, 165–166, arginine 197, arginine 203, 268–271, and lysine 341; these read RD and RPDR. Mn(2+) contacts are provided by aspartate 408, histidine 412, aspartate 449, histidine 450, and histidine 467.

It belongs to the BPG-independent phosphoglycerate mutase family. Monomer. It depends on Mn(2+) as a cofactor.

The catalysed reaction is (2R)-2-phosphoglycerate = (2R)-3-phosphoglycerate. It functions in the pathway carbohydrate degradation; glycolysis; pyruvate from D-glyceraldehyde 3-phosphate: step 3/5. Catalyzes the interconversion of 2-phosphoglycerate and 3-phosphoglycerate. This chain is 2,3-bisphosphoglycerate-independent phosphoglycerate mutase, found in Parasynechococcus marenigrum (strain WH8102).